The primary structure comprises 216 residues: FGFR1 oncogene partner 2 homolog (216 aa).

Coiled coils occupy residues 33–102 and 131–185; these read TTTL…LIMS and SKEL…ITRA. The tract at residues 193-216 is disordered; sequence EDAAESSSHSASSVPNTDLSLRKS. Over residues 206–216 the composition is skewed to polar residues; sequence VPNTDLSLRKS.

Belongs to the SIKE family.

It is found in the cytoplasm. This Xenopus tropicalis (Western clawed frog) protein is FGFR1 oncogene partner 2 homolog (fgfr1op2).